The primary structure comprises 823 residues: ATM interactor (823 aa).

Residues 28 to 67 form a disordered region; it reads GAAAAASGPWVPPGPRLRGSRPRPAGATQQPAVPAPPAGE. Over residues 49–59 the composition is skewed to low complexity; that stretch reads PRPAGATQQPA. The C2H2-type 1 zinc finger occupies 84–109; it reads ILCTVRGCGKILPNSPALNMHLVKSH. The C2H2-type 2; degenerate zinc-finger motif lies at 165–184; it reads HKCSKCSNSYGTEWDLKRHA. The span at 214–225 shows a compositional bias: basic and acidic residues; that stretch reads HEIPAEHRDPPS. 3 disordered regions span residues 214–234, 268–289, and 610–634; these read HEIP…ENCA, EPSF…TPPR, and RSLL…NPGI. The interval 223–442 is required for formation of RAD51 foci; the sequence is PPSKKRKMEN…ADSSVSSCSQ (220 aa). Composition is skewed to polar residues over residues 275–286 and 613–629; these read CGSNTDKQTLTT and LSDT…SGPA.

As to quaternary structure, interacts via its C-terminus with ATM. Interacts with DYNLL1; this interaction inhibits ATMIN transcriptional activity and hence may play a role in a feedback loop whereby DYNLL1 inhibits transactivation of its own promoter by ATMIN. In terms of tissue distribution, ubiquitously expressed in normal tissues and cancer cell lines with highest levels in placenta and skeletal muscle.

It localises to the nucleus. Functionally, transcription factor. Plays a crucial role in cell survival and RAD51 foci formation in response to methylating DNA damage. Involved in regulating the activity of ATM in the absence of DNA damage. May play a role in stabilizing ATM. Binds to the DYNLL1 promoter and activates its transcription. The sequence is that of ATM interactor (ATMIN) from Homo sapiens (Human).